We begin with the raw amino-acid sequence, 198 residues long: V-type ATP synthase subunit E (198 aa).

The protein belongs to the V-ATPase E subunit family.

Functionally, produces ATP from ADP in the presence of a proton gradient across the membrane. This chain is V-type ATP synthase subunit E, found in Clostridium perfringens (strain ATCC 13124 / DSM 756 / JCM 1290 / NCIMB 6125 / NCTC 8237 / Type A).